We begin with the raw amino-acid sequence, 1078 residues long: Cell wall acid trehalase ATC1 (1078 aa).

The N-terminal stretch at 1–54 is a signal peptide; the sequence is MAANSSFFLADNCAPHNQSFIQFCIHAASKKKGRIALMCLANLFLLFSFHLLYA. N-linked (GlcNAc...) asparagine glycosylation is found at Asn4, Asn17, Asn150, Asn184, Asn242, Asn287, Asn301, and Asn350. Substrate is bound at residue 478–479; sequence WD. 3 N-linked (GlcNAc...) asparagine glycosylation sites follow: Asn532, Asn591, and Asn601. The active-site Proton donor is the Glu607. Asn661 and Asn670 each carry an N-linked (GlcNAc...) asparagine glycan. Substrate is bound at residue 676-677; that stretch reads KQ. N-linked (GlcNAc...) asparagine glycans are attached at residues Asn829, Asn837, Asn904, Asn922, Asn931, Asn946, Asn1003, and Asn1037.

Belongs to the glycosyl hydrolase 65 family.

The protein localises to the secreted. It localises to the cell wall. The catalysed reaction is alpha,alpha-trehalose + H2O = alpha-D-glucose + beta-D-glucose. Functionally, cell wall acid trehalase that catalyzes hydrolysis of the disaccharide trehalose and required for growth on trehalose as carbon source. Plays a role in dimorphic conversion and virulence. In Candida albicans (strain SC5314 / ATCC MYA-2876) (Yeast), this protein is Cell wall acid trehalase ATC1 (ATC1).